The primary structure comprises 248 residues: 1-(5-phosphoribosyl)-5-[(5-phosphoribosylamino)methylideneamino] imidazole-4-carboxamide isomerase (248 aa).

The active-site Proton acceptor is the aspartate 8. Catalysis depends on aspartate 129, which acts as the Proton donor.

This sequence belongs to the HisA/HisF family.

It localises to the cytoplasm. The catalysed reaction is 1-(5-phospho-beta-D-ribosyl)-5-[(5-phospho-beta-D-ribosylamino)methylideneamino]imidazole-4-carboxamide = 5-[(5-phospho-1-deoxy-D-ribulos-1-ylimino)methylamino]-1-(5-phospho-beta-D-ribosyl)imidazole-4-carboxamide. The protein operates within amino-acid biosynthesis; L-histidine biosynthesis; L-histidine from 5-phospho-alpha-D-ribose 1-diphosphate: step 4/9. This is 1-(5-phosphoribosyl)-5-[(5-phosphoribosylamino)methylideneamino] imidazole-4-carboxamide isomerase from Rhizobium leguminosarum bv. trifolii (strain WSM2304).